The following is a 356-amino-acid chain: Uroporphyrinogen decarboxylase (356 aa).

Residues 27–31 (RQAGR), aspartate 77, tyrosine 154, threonine 209, and histidine 327 each bind substrate.

This sequence belongs to the uroporphyrinogen decarboxylase family. As to quaternary structure, homodimer.

The protein resides in the cytoplasm. The catalysed reaction is uroporphyrinogen III + 4 H(+) = coproporphyrinogen III + 4 CO2. Its pathway is porphyrin-containing compound metabolism; protoporphyrin-IX biosynthesis; coproporphyrinogen-III from 5-aminolevulinate: step 4/4. Its function is as follows. Catalyzes the decarboxylation of four acetate groups of uroporphyrinogen-III to yield coproporphyrinogen-III. The polypeptide is Uroporphyrinogen decarboxylase (Hamiltonella defensa subsp. Acyrthosiphon pisum (strain 5AT)).